A 289-amino-acid chain; its full sequence is ATP synthase mitochondrial F1 complex assembly factor 2 (289 aa).

Residues 1-40 (MWRIYPRLRDRWRGLLDRRLSDPTVSVWPGPAPQPPARAY) constitute a mitochondrion transit peptide. Residue K133 is modified to N6-succinyllysine.

This sequence belongs to the ATP12 family. Interacts with ATP5F1B; involved in the assembly of the F1 component of the mitochondrial ATP synthase (ATPase). Interacts with FMC1.

The protein localises to the mitochondrion inner membrane. In terms of biological role, plays a role in the assembly of the F1 component of the mitochondrial ATP synthase (ATPase). The protein is ATP synthase mitochondrial F1 complex assembly factor 2 of Mus musculus (Mouse).